The sequence spans 21 residues: C-phycocyanin alpha subunit (21 aa).

Belongs to the phycobiliprotein family. As to quaternary structure, heterodimer of an alpha and a beta subunit, which further assembles into trimers and the trimers into hexamers. Contains one covalently linked bilin chromophore.

It localises to the cellular thylakoid membrane. Light-harvesting photosynthetic bile pigment-protein from the phycobiliprotein complex (phycobilisome, PBS). Phycocyanin is the major phycobiliprotein in the PBS rod. This chain is C-phycocyanin alpha subunit, found in Anabaena sp. (strain L31).